Reading from the N-terminus, the 146-residue chain is Arginine repressor (146 aa).

The protein belongs to the ArgR family.

The protein localises to the cytoplasm. The protein operates within amino-acid biosynthesis; L-arginine biosynthesis [regulation]. Functionally, regulates arginine biosynthesis genes. This Parabacteroides distasonis (strain ATCC 8503 / DSM 20701 / CIP 104284 / JCM 5825 / NCTC 11152) protein is Arginine repressor.